The sequence spans 512 residues: Ribose import ATP-binding protein RbsA 1 (512 aa).

ABC transporter domains follow at residues phenylalanine 8 to glutamate 244 and proline 257 to glycine 502. Glycine 40–serine 47 lines the ATP pocket.

This sequence belongs to the ABC transporter superfamily. Ribose importer (TC 3.A.1.2.1) family. In terms of assembly, the complex is composed of an ATP-binding protein (RbsA), two transmembrane proteins (RbsC) and a solute-binding protein (RbsB).

It is found in the cell inner membrane. The catalysed reaction is D-ribose(out) + ATP + H2O = D-ribose(in) + ADP + phosphate + H(+). Part of the ABC transporter complex RbsABC involved in ribose import. Responsible for energy coupling to the transport system. The protein is Ribose import ATP-binding protein RbsA 1 of Rhizobium etli (strain ATCC 51251 / DSM 11541 / JCM 21823 / NBRC 15573 / CFN 42).